Reading from the N-terminus, the 85-residue chain is Sec-independent protein translocase protein TatA (85 aa).

A helical transmembrane segment spans residues 7–27 (VFGSLGWTEILLILFIALLLF). Residues 50–85 (LTGESDDSSQQISQEQERSVPKEETKTSKSKKSKSA) are disordered. The segment covering 64–76 (EQERSVPKEETKT) has biased composition (basic and acidic residues).

This sequence belongs to the TatA/E family. In terms of assembly, forms a complex with TatC.

Its subcellular location is the cell inner membrane. Part of the twin-arginine translocation (Tat) system that transports large folded proteins containing a characteristic twin-arginine motif in their signal peptide across membranes. TatA could form the protein-conducting channel of the Tat system. This chain is Sec-independent protein translocase protein TatA, found in Leptospira interrogans serogroup Icterohaemorrhagiae serovar Lai (strain 56601).